The sequence spans 639 residues: Transcription factor phomR' (639 aa).

Residues 14-41 (CWTCRLRRKKCNEGGPPCDNCEARGIHC) constitute a DNA-binding region (zn(2)-C6 fungal-type). Disordered regions lie at residues 58–136 (REEA…AGTG) and 476–499 (LPRS…TGPE). Low complexity predominate over residues 68-108 (SGRGRSYSRSSSTAAAAAPKPAEGAMVTGGSSSSSRGSGSS).

The protein resides in the nucleus. Transcription factor; part of the gene cluster that mediates the biosynthesis of the phomopsins, a group of hexapeptide mycotoxins which infects lupins and causes lupinosis disease in livestock. May play a role in the regulation of the production of phomopsins. This is Transcription factor phomR' from Diaporthe leptostromiformis (Lupinosis disease fungus).